Reading from the N-terminus, the 429-residue chain is Adenylosuccinate synthetase (429 aa).

GTP-binding positions include 11 to 17 (GDEGKGK) and 39 to 41 (GHT). Aspartate 12 acts as the Proton acceptor in catalysis. Positions 12 and 39 each coordinate Mg(2+). Residues 12–15 (DEGK), 37–40 (NAGH), threonine 130, arginine 144, asparagine 226, threonine 241, and arginine 305 contribute to the IMP site. The active-site Proton donor is the histidine 40. 301-307 (VTTGRRR) lines the substrate pocket. Residues arginine 307, 333–335 (KLD), and 415–417 (GVG) contribute to the GTP site.

The protein belongs to the adenylosuccinate synthetase family. As to quaternary structure, homodimer. Mg(2+) serves as cofactor.

It is found in the cytoplasm. It catalyses the reaction IMP + L-aspartate + GTP = N(6)-(1,2-dicarboxyethyl)-AMP + GDP + phosphate + 2 H(+). It participates in purine metabolism; AMP biosynthesis via de novo pathway; AMP from IMP: step 1/2. Functionally, plays an important role in the de novo pathway and in the salvage pathway of purine nucleotide biosynthesis. Catalyzes the first committed step in the biosynthesis of AMP from IMP. The protein is Adenylosuccinate synthetase of Yarrowia lipolytica (strain CLIB 122 / E 150) (Yeast).